The primary structure comprises 170 residues: Probable inactive uracil-DNA glycosylase, mitochondrial (170 aa).

The transit peptide at 1 to 53 (MALSTPKTLMDFFQPAKRLKASPSSSSSFPAVSVAGRSRDLGSVANSPPRVTV) directs the protein to the mitochondrion.

Belongs to the uracil-DNA glycosylase (UDG) superfamily. UNG family.

Its subcellular location is the mitochondrion. Functionally, probable inactive paralog of AtUNG (AC Q9LIH6) generated by a gene duplication event and subsequently disrupted by at least two transposon insertions. In Arabidopsis thaliana (Mouse-ear cress), this protein is Probable inactive uracil-DNA glycosylase, mitochondrial.